Consider the following 632-residue polypeptide: SH2B adapter protein 2 (632 aa).

Position 52 is a phosphotyrosine (tyrosine 52). Phosphoserine is present on serine 141. A PH domain is found at 193 to 306; the sequence is DIQREGALRF…WVADIQGCVD (114 aa). Serine 310 bears the Phosphoserine mark. The tract at residues 381 to 409 is disordered; it reads TLESPGGSGSDSNNTGEQGAETDPEAEPE. A compositionally biased stretch (acidic residues) spans 400–409; that stretch reads AETDPEAEPE. Residues 417–515 enclose the SH2 domain; it reads WFHGTLSRVK…SADITLRSYV (99 aa). Disordered stretches follow at residues 516 to 537 and 558 to 632; these read RAQD…SPAC and ASPS…YSFY. Positions 519-532 are enriched in pro residues; that stretch reads DPPPEPGPTPPAAP. 2 stretches are compositionally biased toward low complexity: residues 558-579 and 604-626; these read ASPS…AASG and EAVA…RAVE. Phosphotyrosine is present on tyrosine 629.

This sequence belongs to the SH2B adapter family. Homodimer. Interacts with KIT/c-KIT, SHC1, EPOR, PDGFR, VAV1 and VAV3. Interacts (via N-terminal region) with SHC1. Interacts (via the phosphorylated C-terminus) with GRB2. Interacts (via its SH2 domain) with EPOR, INSR and KIT. Interacts with GRB2 after B-cell antigen receptor stimulation. Interacts (via PH domain) with VAV3. Interacts with NTRK1, NTRK2 and NTRK3 (phosphorylated); after stimulation of the receptor by its extracellular ligand and subsequent autophosphorylation of the receptor. Binds INSR, GRB2, ASB6 and CAP. Insulin stimulation leads to dissociation of CAP. Binds CBS only when SH2B2/APS has become phosphorylated. INSR binding does not depend on the phosphorylation of SH2B2/APS. Post-translationally, tyrosine phosphorylated by JAK2, KIT and other kinases activated by B-cell receptor in response to stimulation with cytokines, IL3, IL5, PDGF, IGF1, IGF2, CSF2/GM-CSF and cross-linking of the B-cell receptor complex. In terms of tissue distribution, expressed in spleen, prostate, testis, uterus, small intestine and skeletal muscle. Among hematopoietic cell lines, expressed exclusively in B-cells. Not expressed in most tumor cell lines.

It is found in the cytoplasm. It localises to the cell membrane. Its function is as follows. Adapter protein for several members of the tyrosine kinase receptor family. Involved in multiple signaling pathways. May be involved in coupling from immunoreceptor to Ras signaling. Acts as a negative regulator of cytokine signaling in collaboration with CBL. Binds to EPOR and suppresses EPO-induced STAT5 activation, possibly through a masking effect on STAT5 docking sites in EPOR. Suppresses PDGF-induced mitogenesis. May induce cytoskeletal reorganization via interaction with VAV3. The chain is SH2B adapter protein 2 (SH2B2) from Homo sapiens (Human).